Consider the following 1108-residue polypeptide: Probable arabinosyltransferase A (1108 aa).

The next 13 helical transmembrane spans lie at 12–34 (IPRSVAAVAGIAGLLLCLAVPLL), 204–223 (IVMVLGTLAVLTAIVALAVL), 258–280 (VGLATWIADAAVLATLLLWHVVG), 334–356 (VWMRLPATLAGIGCWLIISHWVL), 368–387 (ANRVAVFTAGAVFVAAWLPF), 397–414 (IALGVLVTWMLVERAIAL), 421–443 (AVAVVVALLTATLAPQGLIAVAA), 463–482 (GLLAPLAVLAAALSLILVVV), 531–553 (FAVLVMLLCLFGMLVILLRRGHV), 582–604 (WAVQFGAFAGLAGALGALTAFAC), 616–638 (TLYVTALLFVLAWATSGINGWFY), 653–675 (IASHPVTSMFLTLSIITGLLAAW), and 696–718 (VLASTPLLVVATIMVVGEVASLT). Residues 804–825 (PGLVNSDASPNKPNVAYSDSAG) form a disordered region.

This sequence belongs to the emb family.

It localises to the cell membrane. Arabinosyl transferase responsible for the polymerization of arabinose into the arabinan of arabinogalactan. This is Probable arabinosyltransferase A (embA) from Mycobacterium avium.